A 185-amino-acid polypeptide reads, in one-letter code: MIDKDKIREGMKLILEAIGEDINREGLIETPDRIARMYEEIFSGIGMNAKEHLSKTFEVHSNDLVLEKDITFYSMCEHHLVPFYGKVHIAYIPNGRVVGLSKLARCVEVYSKKPQLQERLTTEIADSIMEYLDAQGVMVVVEGEHMCMTMRGVRKPGAKTVTTTYRGKFLEDESLKNDVFRMISM.

Residues C76, H79, and C147 each coordinate Zn(2+).

This sequence belongs to the GTP cyclohydrolase I family. Toroid-shaped homodecamer, composed of two pentamers of five dimers.

The enzyme catalyses GTP + H2O = 7,8-dihydroneopterin 3'-triphosphate + formate + H(+). The protein operates within cofactor biosynthesis; 7,8-dihydroneopterin triphosphate biosynthesis; 7,8-dihydroneopterin triphosphate from GTP: step 1/1. The chain is GTP cyclohydrolase 1 from Clostridium perfringens (strain ATCC 13124 / DSM 756 / JCM 1290 / NCIMB 6125 / NCTC 8237 / Type A).